The chain runs to 476 residues: Cytochrome c oxidase subunit 1 (476 aa).

Residues 19 to 39 (LYYLWFSFLFGSYGFLLSVIL) traverse the membrane as a helical segment. Residue glutamate 42 participates in Ca(2+) binding. 8 helical membrane passes run 61–81 (MIFT…GLFG), 105–125 (ISLL…AAEF), 151–171 (VIIF…LNFI), 194–214 (LIIT…GVLM), 240–260 (LFWF…FGVI), 278–298 (MILA…HHMY), 310–330 (FTST…NWIC), and 345–365 (LLSL…VILG). Histidine 66 serves as a coordination point for Fe(II)-heme a. Residue histidine 246 coordinates Cu cation. The segment at residues 246-250 (HPEVY) is a cross-link (1'-histidyl-3'-tyrosine (His-Tyr)). Tyrosine 250 serves as a coordination point for O2. 2 residues coordinate Cu cation: histidine 295 and histidine 296. Mg(2+) is bound by residues histidine 374 and aspartate 375. The next 2 helical transmembrane spans lie at 379-399 (VIAH…FTTV) and 415-435 (SIVI…FLPM). Histidine 382 is a heme a3 binding site. Position 384 (histidine 384) interacts with Fe(II)-heme a. Proline 448 serves as a coordination point for Ca(2+). The chain crosses the membrane as a helical span at residues 455–475 (NGWNMICSIGSTMTLFGLLIF).

Belongs to the heme-copper respiratory oxidase family. As to quaternary structure, component of the cytochrome c oxidase (complex IV, CIV), a multisubunit enzyme composed of a catalytic core of 3 subunits and several supernumerary subunits. The complex exists as a monomer or a dimer and forms supercomplexes (SCs) in the inner mitochondrial membrane with ubiquinol-cytochrome c oxidoreductase (cytochrome b-c1 complex, complex III, CIII). Heme is required as a cofactor. Cu cation serves as cofactor.

The protein localises to the mitochondrion inner membrane. It catalyses the reaction 4 Fe(II)-[cytochrome c] + O2 + 8 H(+)(in) = 4 Fe(III)-[cytochrome c] + 2 H2O + 4 H(+)(out). Its pathway is energy metabolism; oxidative phosphorylation. In terms of biological role, component of the cytochrome c oxidase, the last enzyme in the mitochondrial electron transport chain which drives oxidative phosphorylation. The respiratory chain contains 3 multisubunit complexes succinate dehydrogenase (complex II, CII), ubiquinol-cytochrome c oxidoreductase (cytochrome b-c1 complex, complex III, CIII) and cytochrome c oxidase (complex IV, CIV), that cooperate to transfer electrons derived from NADH and succinate to molecular oxygen, creating an electrochemical gradient over the inner membrane that drives transmembrane transport and the ATP synthase. Cytochrome c oxidase is the component of the respiratory chain that catalyzes the reduction of oxygen to water. Electrons originating from reduced cytochrome c in the intermembrane space (IMS) are transferred via the dinuclear copper A center (CU(A)) of subunit 2 and heme A of subunit 1 to the active site in subunit 1, a binuclear center (BNC) formed by heme A3 and copper B (CU(B)). The BNC reduces molecular oxygen to 2 water molecules using 4 electrons from cytochrome c in the IMS and 4 protons from the mitochondrial matrix. In Plasmodium falciparum, this protein is Cytochrome c oxidase subunit 1 (MT-CO1).